Consider the following 283-residue polypeptide: Large ribosomal subunit protein uL2 (283 aa).

Disordered regions lie at residues Thr-34 to His-53 and Ala-224 to Lys-283. Residues Asn-232–Trp-245 show a composition bias toward gly residues. Residues Ala-256 to Ser-268 show a composition bias toward basic residues.

This sequence belongs to the universal ribosomal protein uL2 family. Part of the 50S ribosomal subunit. Forms a bridge to the 30S subunit in the 70S ribosome.

Functionally, one of the primary rRNA binding proteins. Required for association of the 30S and 50S subunits to form the 70S ribosome, for tRNA binding and peptide bond formation. It has been suggested to have peptidyltransferase activity; this is somewhat controversial. Makes several contacts with the 16S rRNA in the 70S ribosome. This chain is Large ribosomal subunit protein uL2, found in Methylacidiphilum infernorum (isolate V4) (Methylokorus infernorum (strain V4)).